A 400-amino-acid chain; its full sequence is Subtilisin-like protease 7 (400 aa).

The N-terminal stretch at 1-20 (MGFITKAIPLALAAASVING) is a signal peptide. The propeptide occupies 21–119 (AEILETRAGV…IERDARVQIN (99 aa)). One can recognise an Inhibitor I9 domain in the interval 36-118 (KYIVVMNDGM…YIERDARVQI (83 aa)). Residues 129 to 400 (SWGLARVGSK…GKLINNGSGK (272 aa)) enclose the Peptidase S8 domain. Catalysis depends on charge relay system residues Asp161 and His192. Asn252 carries N-linked (GlcNAc...) asparagine glycosylation. The active-site Charge relay system is the Ser346. N-linked (GlcNAc...) asparagine glycosylation occurs at Asn396.

The protein belongs to the peptidase S8 family.

It localises to the secreted. Functionally, secreted subtilisin-like serine protease with keratinolytic activity that contributes to pathogenicity. This chain is Subtilisin-like protease 7 (SUB7), found in Arthroderma gypseum (strain ATCC MYA-4604 / CBS 118893) (Microsporum gypseum).